Here is a 179-residue protein sequence, read N- to C-terminus: Probable galaptin lec-7 (179 aa).

A Galectin domain is found at 11–138 (SVYQIEENLK…SVDIESIVFK (128 aa)).

The polypeptide is Probable galaptin lec-7 (lec-7) (Caenorhabditis elegans).